We begin with the raw amino-acid sequence, 841 residues long: Auxin response factor 24 (841 aa).

Positions 109–140 (LPEKQQDGNGSGNGNVSKDKVEEEEVVPPAAT) are disordered. The segment at residues 148-250 (FCKTLTASDT…ELRVGVRRAM (103 aa)) is a DNA-binding region (TF-B3). Disordered regions lie at residues 366 to 397 (PRPDRVSPWQIEPANSPSPVNPLPAPRTKRAR), 663 to 715 (QDAL…SRSC), and 804 to 841 (GALNSRSEDSRSTSVERGLVGEGLQGGLSTPSLNSENC). Residues 684 to 695 (AQHDSAREKHQS) are compositionally biased toward basic and acidic residues. 2 stretches are compositionally biased toward polar residues: residues 701-713 (KNIQSKQQNGSSR) and 830-841 (GLSTPSLNSENC). The PB1 domain maps to 713–797 (RSCKKVHKQG…HKIFIYTREE (85 aa)).

The protein belongs to the ARF family. Homodimers and heterodimers. In terms of tissue distribution, expressed in roots, culms, leaves and young panicles.

It is found in the nucleus. Auxin response factors (ARFs) are transcriptional factors that bind specifically to the DNA sequence 5'-TGTCTC-3' found in the auxin-responsive promoter elements (AuxREs). The sequence is that of Auxin response factor 24 (ARF24) from Oryza sativa subsp. japonica (Rice).